A 1179-amino-acid chain; its full sequence is MFSIDIQGKSMSLCDPTSKIKQMQQQQQQLQQGTNNGIQKDQQLPNMIINGNSNSYLNNGSNLQQQAVIQQSNHKQSQIKYNSPLSHQQHHQFKIGHQNKLEYLRQQQAQKYNQIYQLDPQLQQQNQMFQQHQYMQNVQMQQQLLYQGNQEVFPPFNQIANGSAQNSILLQQYLSNNKGQTNNSNRENGGNFHSEQSPKSAAGSVVSGNGSNTQFAANILRNSNIIQQQNEFRFQQIQQTHQLLHSLVQQQPQPLSQQHSNQSSQSSNPQSQSPLPLSISSQQPVISMANYFNQPSQQSNSLFNGQQPTMFNSSENFQQKNILYSCVGNPNNPYNHHINNPYLQEKRYYKSSKLPKIKKENKPQQAFSDIRPSSREKSARFHLAASINTILNQNGSTSVNTQNNENMVQTLKGHSYSAVTEKSNIGQQEVNIPTTSKTQTLIKEHSLTNINSASKENNQVTLASNSNQTSKKAYENLMSAENDEEDKLKCIRYFRYNLGQLLHILGKKEIYFSNLNSKKPIKTFASITQQLGQKHMNLLSKNTINIINKVKKIVATKGKYKYRERFNFLHSAQLKSINYDVRKRLNQIQDKKVLSNTKSKDEEESSDDDETPVKSKSNNQNAVQQTDLAKWKKYNRLDPKTKVFIIKGGYGDLRKALQERGWVENPDYFSPCFDLKWTCKVQDIDYDNLQENQVVNHFDNNQTFTSKYGLARNLRTLIHSENIDVYKFFPRCFDLGDLQEFEDFIENFKVAKAESLVHRFKDMLKNGIESIDDKLELKIRLCNEVASRKFIDFYETVDFIFNYDVLPCVSPEEWEIISKDEFQLDNKKIEFYLERLRSHPTFKHLYYSNSQSQKQHMNKRKNSHRISVNHNHNDPIEEESAQSSTSLKQDSLQRFSSKSQELLDLCNQTLKKSSEKDPQHHLNGYRNIWIVKPNFLSRGRGIKCFNSLDKIMDYVVGKETQFVVQKYIENPLLINNKKFDMRQWAIVQDFCPPRIWFFEECYIRLCSVEHNIDDLNNRFVHLTNNIVQKYNKDAYADKDDLMMSQEQFAQYLKETEGRDVFYEEIQPKLKQMVIQSLKSCQDQVGARKNSMEFIGYDFMIDSNYQPWLIEINSSPSMEYSTSITEELVQRVLQDTTKVIVDYSMAKKGTKKNVDTGGFKLIYKGEKQTKNNKVLASYKK.

Positions Asn177 to Lys199 are enriched in polar residues. Disordered stretches follow at residues Asn177 to Gly208, Gln250 to Ser278, Lys592 to Gln625, and Gln853 to Asp890. Residues Lys592–Asp601 show a composition bias toward basic and acidic residues. Composition is skewed to polar residues over residues Lys614–Gln625 and Ala881–Asp890. Positions Phe790–Asn1152 constitute a TTL domain. Residues Gln965 to Ile968, Lys978, and Asp980 each bind ATP.

It is found in the cell projection. It localises to the cilium. Its subcellular location is the cytoplasm. The protein resides in the cytoskeleton. The protein localises to the cilium axoneme. Polyglycylase which modifies tubulin, generating side chains of glycine on the gamma-carboxyl groups of specific glutamate residues within the C-terminal tail of tubulin. Polyglycylates tubulin, with a preference for alpha-tubulin toward beta-tubulin. In Tetrahymena thermophila (strain SB210), this protein is Tubulin glycylase 3B (TTLL3B).